A 263-amino-acid polypeptide reads, in one-letter code: uncharacterized protein (263 aa).

The first 22 residues, 1-22, serve as a signal peptide directing secretion; sequence MEYLKRLALFISVIILTIFIMG. Residue cysteine 23 is the site of N-palmitoyl cysteine attachment. The S-diacylglycerol cysteine moiety is linked to residue cysteine 23.

It belongs to the staphylococcal tandem lipoprotein family.

It is found in the cell membrane. This is an uncharacterized protein from Staphylococcus aureus (strain MSSA476).